Consider the following 180-residue polypeptide: Shikimate kinase (180 aa).

Residue 14 to 19 (GAGKSC) coordinates ATP. Ser-18 serves as a coordination point for Mg(2+). 3 residues coordinate substrate: Asp-36, Arg-60, and Gly-82. Residue Arg-120 participates in ATP binding. Position 139 (Arg-139) interacts with substrate.

This sequence belongs to the shikimate kinase family. Monomer. The cofactor is Mg(2+).

The protein localises to the cytoplasm. It carries out the reaction shikimate + ATP = 3-phosphoshikimate + ADP + H(+). Its pathway is metabolic intermediate biosynthesis; chorismate biosynthesis; chorismate from D-erythrose 4-phosphate and phosphoenolpyruvate: step 5/7. Its function is as follows. Catalyzes the specific phosphorylation of the 3-hydroxyl group of shikimic acid using ATP as a cosubstrate. This chain is Shikimate kinase, found in Xanthomonas axonopodis pv. citri (strain 306).